The primary structure comprises 368 residues: FAD-dependent monooxygenase phomE (368 aa).

Alanine 11 contributes to the FAD binding site. Residues arginine 140 and tyrosine 178 contribute to the active site. Residues aspartate 249 and glycine 262 each coordinate FAD.

The protein belongs to the paxM FAD-dependent monooxygenase family. In terms of assembly, monomer. It depends on FAD as a cofactor.

Functionally, FAD-dependent monooxygenase; part of the gene cluster that mediates the biosynthesis of the phomopsins, a group of hexapeptide mycotoxins which infects lupins and causes lupinosis disease in livestock. The role of phomE within the phomopsins biosynthesis pathway has still to be determined. The pathway starts with the processing of the precursor phomA by several endopeptidases including kexin proteases as well as the cluster-specific S41 family peptidase phomP1 and the oligopeptidase phomG to produce 10 identical copies of the hexapeptide Tyr-Val-Ile-Pro-Ile-Asp. After being excised from the precursor peptide, the core peptides are cyclized and modified post-translationally by enzymes encoded within the gene cluster. The timing and order of proteolysis of the phomA precursor and PTMs are still unknown. Two tyrosinase-like enzymes, phomQ1 and phomQ2, catalyze the chlorination and hydroxylation of Tyr, respectively. PhomYb, is proposed to be involved in the construction of the macrocyclic structure. The other 4 ustYa family proteins may be involved in PTMs that generate the unique structure of phomopsin A. PhomYa is required for the hydroxylation of C-beta of Tyr. PhomYc, phomYd, and phomYe are responsible for the biosynthesis of 2,3-dehydroisoleucine (dIle), 2,3-dehydroaspartic acid (dAsp), and 3,4-dehydroproline (dPro), respectively. While dIle formation by phomYc is indispensable for the installation of dAsp by phomYd, the order of the other PTMs have not been elucidated yet. Most of the biosynthetic enzymes likely have broad substrate specificity, and thus, there might be a metabolic grid from a precursor to phomopsin A. The enzyme(s) responsible for the biosynthesis of 3,4-dehydrovaline (dVal) have also not been identified yet. Finally, phomM acts as an S-adenosylmethionine-dependent alpha-N-methyltransferase that catalyzes two successive N-methylation reactions, converting N-desmethyl-phomopsin A to phomopsin A and phomopsin A further to an N,N-dimethylated congener called phomopsin E. This Diaporthe leptostromiformis (Lupinosis disease fungus) protein is FAD-dependent monooxygenase phomE.